A 292-amino-acid polypeptide reads, in one-letter code: E3 ubiquitin-protein ligase RNF144A (292 aa).

The TRIAD supradomain stretch occupies residues 16-236 (PLVSCKLCLG…YDKGPCRNKL (221 aa)). Zn(2+) is bound by residues Cys20, Cys23, Cys43, Cys46, Cys111, Cys116, Cys135, Cys138, Cys143, Cys146, His151, Cys156, Cys185, and Cys188. The RING-type 1 zinc-finger motif lies at 20–70 (CKLCLGEYPVEQMTTIAQCQCIFCTLCLKQYVELLIKEGLETAISCPDAAC). The segment at 91–156 (QRYKKLQFER…KASWHPGQGC (66 aa)) adopts an IBR-type zinc-finger fold. Residues 185–214 (CPKCKVYIERDEGCAQMMCKNCKHAFCWYC) form an RING-type 2; atypical zinc finger. Cys198 is an active-site residue. Residues Cys203, Cys206, Cys211, Cys214, His226, and Cys232 each contribute to the Zn(2+) site. The chain crosses the membrane as a helical span at residues 250-270 (VVGIFAGFGLLLLVASPFLLL).

This sequence belongs to the RBR family. RNF144 subfamily. In terms of assembly, self-associates. Interacts with UBE2L3. Post-translationally, auto-ubiquitinated.

Its subcellular location is the cell membrane. It localises to the cytoplasmic vesicle membrane. The protein localises to the endosome membrane. It is found in the endoplasmic reticulum membrane. The enzyme catalyses [E2 ubiquitin-conjugating enzyme]-S-ubiquitinyl-L-cysteine + [acceptor protein]-L-lysine = [E2 ubiquitin-conjugating enzyme]-L-cysteine + [acceptor protein]-N(6)-ubiquitinyl-L-lysine.. Its pathway is protein modification; protein ubiquitination. Functionally, E3 ubiquitin-protein ligase which accepts ubiquitin from E2 ubiquitin-conjugating enzymes UBE2L3 and UBE2L6 in the form of a thioester and then directly transfers the ubiquitin to targeted substrates. Mediates the ubiquitination and degradation of the DNA damage kinase PRKDC during DNA damage. Positively regulates DNA virus or exogenous cytosolic DNA-triggered innate immune response by mediating STING1 ubiquitination and increasing its 'Lys-6'-linked ubiquitination and translocation from the endoplasmic reticulum to the Golgi leading to downstream signaling pathways. Plays a positive role in EGF-dependent cell proliferation by prolonging EGF/EGFR signaling during EGF stimulation through EGFR ubiquitination. Increases ERK activity independently of EGFR signaling by promoting polyubiquitination and subsequent degradation of VRK3 in the cytosol. The sequence is that of E3 ubiquitin-protein ligase RNF144A (RNF144A) from Homo sapiens (Human).